We begin with the raw amino-acid sequence, 235 residues long: uncharacterized protein (235 aa).

Positions 1–24 (MSDRMKLKGLLAFCLLFLSSFVLA) are cleaved as a signal peptide.

This is an uncharacterized protein from Haemophilus influenzae (strain ATCC 51907 / DSM 11121 / KW20 / Rd).